Reading from the N-terminus, the 417-residue chain is Tyrosine--tRNA ligase (417 aa).

L-tyrosine is bound at residue Y39. A 'HIGH' region motif is present at residues 44-53 (PTASSLHAGS). Positions 176 and 180 each coordinate L-tyrosine. The short motif at 236 to 240 (KMGKS) is the 'KMSKS' region element. K239 lines the ATP pocket. The S4 RNA-binding domain occupies 350 to 417 (AGLLALLVQA…KKKHVLIKPL (68 aa)).

The protein belongs to the class-I aminoacyl-tRNA synthetase family. TyrS type 1 subfamily. In terms of assembly, homodimer.

Its subcellular location is the cytoplasm. The catalysed reaction is tRNA(Tyr) + L-tyrosine + ATP = L-tyrosyl-tRNA(Tyr) + AMP + diphosphate + H(+). Functionally, catalyzes the attachment of tyrosine to tRNA(Tyr) in a two-step reaction: tyrosine is first activated by ATP to form Tyr-AMP and then transferred to the acceptor end of tRNA(Tyr). The protein is Tyrosine--tRNA ligase of Bartonella quintana (strain Toulouse) (Rochalimaea quintana).